We begin with the raw amino-acid sequence, 154 residues long: Putative pre-16S rRNA nuclease (154 aa).

This sequence belongs to the YqgF nuclease family.

It localises to the cytoplasm. In terms of biological role, could be a nuclease involved in processing of the 5'-end of pre-16S rRNA. The polypeptide is Putative pre-16S rRNA nuclease (Rickettsia akari (strain Hartford)).